Here is a 475-residue protein sequence, read N- to C-terminus: 7-dehydrocholesterol reductase (475 aa).

Residues 1–21 (MAAKSQPSAPKTKSTSGLTNG) form a disordered region. Ser-14 carries the phosphoserine modification. The next 6 membrane-spanning stretches (helical) occupy residues 40 to 60 (LASV…FIMA), 151 to 173 (WLLT…PTII), 178 to 200 (IPLL…VKGY), 266 to 286 (VTNS…DFFW), 306 to 326 (LGWG…LYLV), and 331 to 351 (QLPT…YYIF). NADP(+)-binding positions include Lys-358, Arg-362, Leu-395, Trp-400, and 407–408 (NY). Residues 420-440 (LACGGGHLLPYFYIIFMAILL) traverse the membrane as a helical segment. Residues Asp-447, 451-455 (CANKY), and Tyr-462 each bind NADP(+).

This sequence belongs to the ERG4/ERG24 family. In terms of assembly, interacts with DHCR24; this interaction regulates DHCR7 activity. Interacts with TMEM147.

The protein resides in the endoplasmic reticulum membrane. The enzyme catalyses cholesterol + NADP(+) = 7-dehydrocholesterol + NADPH + H(+). It catalyses the reaction 7-dehydrodesmosterol + NADPH + H(+) = desmosterol + NADP(+). The catalysed reaction is 5,6alpha-epoxy-5alpha-cholestan-3beta-ol + H2O = 5alpha-cholestane-3beta,5,6beta-triol. It carries out the reaction 5,6beta-epoxy-5beta-cholestan-3beta-ol + H2O = 5alpha-cholestane-3beta,5,6beta-triol. It participates in steroid biosynthesis; cholesterol biosynthesis. Its function is as follows. Oxidoreductase that catalyzes the last step of the cholesterol synthesis pathway, which transforms cholesta-5,7-dien-3beta-ol (7-dehydrocholesterol,7-DHC) into cholesterol by reducing the C7-C8 double bond of its sterol core. Can also metabolize cholesta-5,7,24-trien-3beta-ol (7-dehydrodemosterol, 7-DHD) to desmosterol, which is then metabolized by the Delta(24)-sterol reductase (DHCR24) to cholesterol. Modulates ferroptosis (a form of regulated cell death driven by iron-dependent lipid peroxidation) through the metabolic breakdown of the anti-ferroptotic metabolites 7-DHC and 7-DHD which, when accumulated, divert the propagation of peroxyl radical-mediated damage from phospholipid components to its sterol core, protecting plasma and mitochondrial membranes from phospholipid autoxidation. Functionally, component of the microsomal antiestrogen binding site (AEBS), a multiproteic complex at the ER membrane that consists of an association between cholestenol Delta-isomerase/EBP and DHCR7. This complex is responsible for cholesterol-5,6-epoxide hydrolase (ChEH) activity, which consists in the hydration of cholesterol-5,6-epoxides (5,6-EC) into cholestane-3beta,5alpha,6beta-triol (CT). The precise role of each component of this complex has not been described yet. In Bos taurus (Bovine), this protein is 7-dehydrocholesterol reductase (DHCR7).